The primary structure comprises 103 residues: Pterin-4-alpha-carbinolamine dehydratase 2 (103 aa).

Belongs to the pterin-4-alpha-carbinolamine dehydratase family. In terms of tissue distribution, highest level found in the kidney, liver, heart and ovarian follicles.

The catalysed reaction is (4aS,6R)-4a-hydroxy-L-erythro-5,6,7,8-tetrahydrobiopterin = (6R)-L-erythro-6,7-dihydrobiopterin + H2O. Its function is as follows. Involved in tetrahydrobiopterin biosynthesis. Seems to both prevent the formation of 7-pterins and accelerate the formation of quinonoid-BH2. Regulates the dimerization of homeodomain protein HNF-1-alpha and enhances its transcriptional activity. The protein is Pterin-4-alpha-carbinolamine dehydratase 2 (PCBD2) of Gallus gallus (Chicken).